A 543-amino-acid chain; its full sequence is Serine/threonine-protein kinase PkaA (543 aa).

Positions 8–276 constitute a Protein kinase domain; the sequence is YLLEEPLGRG…ENLARGLRVV (269 aa). ATP-binding positions include 14–22 and Lys48; that span reads LGRGATGTV. The active-site Proton acceptor is Asp142. The tract at residues 303–480 is disordered; sequence PAPAQVPGAP…RQRSANPMRI (178 aa). Pro residues predominate over residues 352–361; that stretch reads VMPPVPPGQP. Composition is skewed to low complexity over residues 407-420 and 428-451; these read RQVS…RQAP and PGYG…QPQR. A compositionally biased stretch (pro residues) spans 452-461; that stretch reads YAPPPAPEPQ.

It belongs to the protein kinase superfamily. Ser/Thr protein kinase family. Autophosphorylated mainly at Thr and slightly at Ser.

The catalysed reaction is L-seryl-[protein] + ATP = O-phospho-L-seryl-[protein] + ADP + H(+). It catalyses the reaction L-threonyl-[protein] + ATP = O-phospho-L-threonyl-[protein] + ADP + H(+). This Streptomyces coelicolor (strain ATCC BAA-471 / A3(2) / M145) protein is Serine/threonine-protein kinase PkaA (pkaA).